A 523-amino-acid chain; its full sequence is UDP-glucuronosyltransferase 3A2 (523 aa).

An N-terminal signal peptide occupies residues 1–22 (MAGQRVLLLVGFLLPGVLLSEA). Topologically, residues 23–483 (AKILTISTVG…YVFQQPWHEQ (461 aa)) are extracellular. Asn-52 carries N-linked (GlcNAc...) asparagine glycosylation. The helical transmembrane segment at 484 to 504 (YLLDVFVFLLGLTLGTLWLCG) threads the bilayer. At 505 to 523 (KLLGMAVWWLRGARKVKET) the chain is on the cytoplasmic side.

This sequence belongs to the UDP-glycosyltransferase family.

It localises to the membrane. The enzyme catalyses glucuronate acceptor + UDP-alpha-D-glucuronate = acceptor beta-D-glucuronoside + UDP + H(+). Functionally, UDP-glucuronosyltransferases catalyze phase II biotransformation reactions in which lipophilic substrates are conjugated with glucuronic acid to increase water solubility and enhance excretion. They are of major importance in the conjugation and subsequent elimination of potentially toxic xenobiotics and endogenous compounds. In Homo sapiens (Human), this protein is UDP-glucuronosyltransferase 3A2 (UGT3A2).